The primary structure comprises 462 residues: CCA-adding enzyme (462 aa).

ATP contacts are provided by Ser-54 and Arg-57. CTP is bound by residues Ser-54 and Arg-57. Positions 66, 68, and 117 each coordinate Mg(2+). ATP is bound by residues His-140, Lys-160, and Tyr-169. 3 residues coordinate CTP: His-140, Lys-160, and Tyr-169.

The protein belongs to the tRNA nucleotidyltransferase/poly(A) polymerase family. Archaeal CCA-adding enzyme subfamily. As to quaternary structure, homodimer. Requires Mg(2+) as cofactor.

It catalyses the reaction a tRNA precursor + 2 CTP + ATP = a tRNA with a 3' CCA end + 3 diphosphate. The enzyme catalyses a tRNA with a 3' CCA end + 2 CTP + ATP = a tRNA with a 3' CCACCA end + 3 diphosphate. Functionally, catalyzes the addition and repair of the essential 3'-terminal CCA sequence in tRNAs without using a nucleic acid template. Adds these three nucleotides in the order of C, C, and A to the tRNA nucleotide-73, using CTP and ATP as substrates and producing inorganic pyrophosphate. tRNA 3'-terminal CCA addition is required both for tRNA processing and repair. Also involved in tRNA surveillance by mediating tandem CCA addition to generate a CCACCA at the 3' terminus of unstable tRNAs. While stable tRNAs receive only 3'-terminal CCA, unstable tRNAs are marked with CCACCA and rapidly degraded. This chain is CCA-adding enzyme, found in Halorubrum lacusprofundi (strain ATCC 49239 / DSM 5036 / JCM 8891 / ACAM 34).